The following is a 314-amino-acid chain: Protein phosphatase PTC7 homolog fig (314 aa).

The PPM-type phosphatase domain maps to 43-309 (PYLVTVVQGR…DDITLILSSV (267 aa)). Positions 87, 88, and 232 each coordinate Mn(2+).

Belongs to the PP2C family. The cofactor is Mg(2+). It depends on Mn(2+) as a cofactor.

The catalysed reaction is O-phospho-L-seryl-[protein] + H2O = L-seryl-[protein] + phosphate. It carries out the reaction O-phospho-L-threonyl-[protein] + H2O = L-threonyl-[protein] + phosphate. This is Protein phosphatase PTC7 homolog fig from Drosophila melanogaster (Fruit fly).